A 446-amino-acid chain; its full sequence is MPALPILALALAPLLVNGQLSGSVGPLTSAHSKAATKTCNVLDYGAVADNSTDIGSALSEAWDACSDGGLIYIPPGDYAMDTWVSLSGGKATAIILDGTIYRTGTDGGNMILVENSSDFELYSNSSSGAVQGFGYVYHREGDLDGPRILRLQDVSNFAVHDIILVDAPAFHFVMDDCSDGEVYNMAIRGGNSGGLDGIDVWGSNIWVHDVEVTNKDECVTVKGPANNILVESIYCNWSGGCAMGSLGADTDITDILYRNVYTWSSNQMYMIKSNGGSGTVNNTLLENFIGRGNRYSLDVDSYWSSMTAVDGDGVQLSNITFKNWKGTEADGAERGPIKVVCSDTAPCTDITIEDFAMWTESGDEQTYTCESAYGDGFCLEDSDSTTSYTTTQTVTTAPSGYSATTMAADLTTDFGTTASIPIPTIPTSFYPGLTAISPLASAATTA.

A signal peptide spans 1–18 (MPALPILALALAPLLVNG). Cys-39 and Cys-65 are joined by a disulfide. N-linked (GlcNAc...) asparagine glycans are attached at residues Asn-50, Asn-115, and Asn-124. Asp-216 functions as the Proton donor in the catalytic mechanism. A disulfide bond links Cys-218 and Cys-235. N-linked (GlcNAc...) asparagine glycans are attached at residues Asn-236, Asn-281, and Asn-318. Disulfide bonds link Cys-341–Cys-347 and Cys-369–Cys-378.

The protein belongs to the glycosyl hydrolase 28 family.

The protein resides in the secreted. The enzyme catalyses Endohydrolysis of alpha-D-GalA-(1-&gt;2)-alpha-L-Rha glycosidic bond in the rhamnogalacturonan I backbone with initial inversion of anomeric configuration releasing oligosaccharides with beta-D-GalA at the reducing end.. In terms of biological role, pectinolytic enzymes consist of four classes of enzymes: pectine lyase, polygalacturonase, pectin methylesterase and rhamnogalacturonase. Hydrolyzes alpha-D-galacturonopyranosyl-(1,2)-alpha-L-rhamnopyranosyl linkages in the backbone of the hairy regions of pectins. This is Rhamnogalacturonase A (rhgA) from Aspergillus niger.